A 912-amino-acid chain; its full sequence is Accessory gland protein Acp36DE (912 aa).

An N-terminal signal peptide occupies residues 1-23 (MWTLTCQQFIALILLGTLVPSES). Composition is skewed to low complexity over residues 193 to 220 (QSQSQTQSQSASQSESNASSQFQAQEQS), 230 to 255 (SESQSQSESQSQSESQKQSQSQSQRQ), 271 to 324 (KSNE…GLQQ), and 521 to 544 (QSQLQESKSNSLSQSQSQSQEQLQ). Disordered stretches follow at residues 193-255 (QSQS…SQRQ), 271-349 (KSNE…QKQL), 518-544 (TQTQSQLQESKSNSLSQSQSQSQEQLQ), 638-671 (PSEGKPAPGNQGPSIEPKLVPQPGSLDKLPSGGG), and 732-912 (GQQQ…NLSG). Composition is skewed to low complexity over residues 732–757 (GQQQKEQQAQESINKQQSSSAGSSSQ) and 765–785 (QSTGAQGSQQGLQAGSTGLQT). Basic and acidic residues predominate over residues 803 to 818 (RLKEQEQLRIQTENDQ). The segment covering 821–845 (SSSSSHSNSQNSQSSSSQSSQASQS) has biased composition (low complexity). Polar residues predominate over residues 851 to 861 (EAGNRNTLLLD). The span at 862–897 (QSSSKTQSESKSESSSQSSSHSSSQSTSNSSSNVQS) shows a compositional bias: low complexity. A compositionally biased stretch (polar residues) spans 898 to 912 (KLQGESQALLNNLSG).

In terms of processing, proteolytically cleaved by the seminal metalloprotease Semp1. Cleavage appears to take place in the mated female. Detected in the male accessory glands (at protein level). Produced in the accessory glands and secreted into seminal fluid.

It localises to the secreted. Responsible for physiological and behavioral changes in mated female flies. Associates with sperm and localizes to specific regions of the female reproductive tract, including the sperm storage organs. It accelerates sperm accumulation into storage but does not mediate the entry of the first sperm into storage. Once sperm storage has initiated it seems to act as a guidance factor helping subsequent sperm move into storage, a corral concentrating sperm around the SSO entrances and/or a trigger for responses within the female that accelerate storage of sperm. The protein is Accessory gland protein Acp36DE (Acp36DE) of Drosophila melanogaster (Fruit fly).